A 159-amino-acid polypeptide reads, in one-letter code: Transmembrane protein 92 (159 aa).

Residues 1–26 form the signal peptide; the sequence is MSQAWVPGLAPTLLFSLLAGPQKIAA. Topologically, residues 27 to 57 are extracellular; sequence KCGLILACPKGFKCCGDSCCQENELFPGPVR. Residues 58 to 78 form a helical membrane-spanning segment; sequence IFVIIFLVILSVFCICGLAKC. The Cytoplasmic portion of the chain corresponds to 79–159; it reads FCRNCREPEP…DQRGIDNPAF (81 aa). The tract at residues 122-159 is disordered; sequence EVILKPSLGPTPTEPPPPYSFRPEEYTGDQRGIDNPAF.

The protein localises to the membrane. This chain is Transmembrane protein 92 (TMEM92), found in Homo sapiens (Human).